Reading from the N-terminus, the 262-residue chain is Acyl-[acyl-carrier-protein]--UDP-N-acetylglucosamine O-acyltransferase (262 aa).

Belongs to the transferase hexapeptide repeat family. LpxA subfamily. In terms of assembly, homotrimer.

It is found in the cytoplasm. The catalysed reaction is a (3R)-hydroxyacyl-[ACP] + UDP-N-acetyl-alpha-D-glucosamine = a UDP-3-O-[(3R)-3-hydroxyacyl]-N-acetyl-alpha-D-glucosamine + holo-[ACP]. Its pathway is glycolipid biosynthesis; lipid IV(A) biosynthesis; lipid IV(A) from (3R)-3-hydroxytetradecanoyl-[acyl-carrier-protein] and UDP-N-acetyl-alpha-D-glucosamine: step 1/6. Its function is as follows. Involved in the biosynthesis of lipid A, a phosphorylated glycolipid that anchors the lipopolysaccharide to the outer membrane of the cell. This Burkholderia mallei (strain NCTC 10247) protein is Acyl-[acyl-carrier-protein]--UDP-N-acetylglucosamine O-acyltransferase.